A 123-amino-acid polypeptide reads, in one-letter code: Large ribosomal subunit protein uL14 (123 aa).

It belongs to the universal ribosomal protein uL14 family. Part of the 50S ribosomal subunit. Forms a cluster with proteins L3 and L19. In the 70S ribosome, L14 and L19 interact and together make contacts with the 16S rRNA in bridges B5 and B8.

Functionally, binds to 23S rRNA. Forms part of two intersubunit bridges in the 70S ribosome. The chain is Large ribosomal subunit protein uL14 from Yersinia pestis bv. Antiqua (strain Antiqua).